Here is a 342-residue protein sequence, read N- to C-terminus: Spermidine synthase (342 aa).

Residues 9-42 (MKGTELPVKRPREEEAETEMEAANNSNNGCEKEE) form a disordered region. The 238-residue stretch at 52-289 (PGWFSEISPL…GMIGFMLCST (238 aa)) folds into the PABS domain. Glutamine 83 contacts S-adenosyl 3-(methylsulfanyl)propylamine. Position 113 (tyrosine 113) interacts with putrescine. Residues glutamine 114, aspartate 138, glutamate 158, 189-190 (DG), and aspartate 208 each bind S-adenosyl 3-(methylsulfanyl)propylamine. The active-site Proton acceptor is the aspartate 208. Putrescine-binding positions include 208–211 (DSSD) and tyrosine 277.

The protein belongs to the spermidine/spermine synthase family.

The enzyme catalyses S-adenosyl 3-(methylsulfanyl)propylamine + putrescine = S-methyl-5'-thioadenosine + spermidine + H(+). The protein operates within amine and polyamine biosynthesis; spermidine biosynthesis; spermidine from putrescine: step 1/1. This Solanum lycopersicum (Tomato) protein is Spermidine synthase (SPDSYN).